Here is a 304-residue protein sequence, read N- to C-terminus: MQKFDTKTFQGLILTLQDYWARQGCTIVQPLDMEVGAGTSHPMTCLRALGPEPMATAYVQPSRRPTDGRYGENPNRLQHYYQFQVVIKPSPDNIQELYLGSLKELGLDPTIHDIRFVEDNWENPTLGAWGLGWEVWLNGMEVTQFTYFQQVGGMECKPVTGEITYGLERLAMYIQGVDSVYDLVWSDGPLGVTTYGDVFHQNEVEQSTYNFEYADVDFLFSCFEQYEKEAQSLLALEKPLPLPAYERILKAGHTFNLLDARKAISVTERQRYILRIRTLTKAVAEAYYASREALGFPMCKKNKS.

It belongs to the class-II aminoacyl-tRNA synthetase family. As to quaternary structure, tetramer of two alpha and two beta subunits.

Its subcellular location is the cytoplasm. It carries out the reaction tRNA(Gly) + glycine + ATP = glycyl-tRNA(Gly) + AMP + diphosphate. In Serratia proteamaculans (strain 568), this protein is Glycine--tRNA ligase alpha subunit.